The primary structure comprises 509 residues: ESX-2 secretion system protein eccD2 (509 aa).

A run of 11 helical transmembrane segments spans residues 135–155, 170–190, 196–216, 222–242, 248–268, 281–301, 364–384, 389–409, 418–438, 449–469, and 487–507; these read LTAA…VLAL, AMAG…WWGW, LFSG…ACAP, AAHA…IGVA, QTAV…VAAV, ICVL…ALWV, VQVG…WGVL, PWAW…ITQG, AVAL…KYAL, LWPA…ALVV, and VLAM…FAWL.

This sequence belongs to the EccD/Snm4 family. As to quaternary structure, part of the ESX-2 / type VII secretion system (T7SS), which is composed of cytosolic and membrane components.

It is found in the cell membrane. This Mycobacterium tuberculosis (strain CDC 1551 / Oshkosh) protein is ESX-2 secretion system protein eccD2 (eccD2).